Reading from the N-terminus, the 260-residue chain is uncharacterized protein (260 aa).

This sequence belongs to the MG032/MG096/MG288 family.

This is an uncharacterized protein from Mycoplasma pneumoniae (strain ATCC 29342 / M129 / Subtype 1) (Mycoplasmoides pneumoniae).